The chain runs to 105 residues: Large ribosomal subunit protein uL24 (105 aa).

Belongs to the universal ribosomal protein uL24 family. As to quaternary structure, part of the 50S ribosomal subunit.

Its function is as follows. One of two assembly initiator proteins, it binds directly to the 5'-end of the 23S rRNA, where it nucleates assembly of the 50S subunit. Functionally, one of the proteins that surrounds the polypeptide exit tunnel on the outside of the subunit. The chain is Large ribosomal subunit protein uL24 from Anaplasma marginale (strain St. Maries).